The following is a 329-amino-acid chain: tRNA-modifying protein YgfZ (329 aa).

The folate site is built by tryptophan 32 and tryptophan 190.

Belongs to the tRNA-modifying YgfZ family.

The protein resides in the cytoplasm. In terms of biological role, folate-binding protein involved in regulating the level of ATP-DnaA and in the modification of some tRNAs. It is probably a key factor in regulatory networks that act via tRNA modification, such as initiation of chromosomal replication. This chain is tRNA-modifying protein YgfZ, found in Photobacterium profundum (strain SS9).